The primary structure comprises 304 residues: Uricase (304 aa).

N-acetylalanine is present on alanine 2. An N6-acetyllysine; alternate mark is found at lysine 10 and lysine 23. N6-succinyllysine; alternate is present on residues lysine 10 and lysine 23. Lysine 23 acts as the Charge relay system in catalysis. N6-acetyllysine occurs at positions 27 and 36. Phosphoserine is present on residues serine 39 and serine 63. Threonine 68 acts as the Charge relay system in catalysis. The urate site is built by threonine 68 and aspartate 69. Lysine 118, lysine 122, and lysine 164 each carry N6-acetyllysine. A urate-binding site is contributed by phenylalanine 170. 2 positions are modified to N6-acetyllysine: lysine 175 and lysine 185. Arginine 187 serves as a coordination point for urate. N6-acetyllysine; alternate is present on residues lysine 221 and lysine 228. N6-succinyllysine; alternate is present on residues lysine 221 and lysine 228. Serine 232 carries the phosphoserine modification. Urate is bound by residues valine 235, glutamine 236, and asparagine 262. The active-site Charge relay system is histidine 264. An N6-acetyllysine modification is found at lysine 278. Tyrosine 289 is modified (phosphotyrosine). A Microbody targeting signal motif is present at residues 302–304 (SRL).

The protein belongs to the uricase family. In terms of assembly, homotetramer.

It localises to the peroxisome. The catalysed reaction is urate + O2 + H2O = 5-hydroxyisourate + H2O2. Its pathway is purine metabolism; urate degradation; (S)-allantoin from urate: step 1/3. Its function is as follows. Catalyzes the oxidation of uric acid to 5-hydroxyisourate, which is further processed to form (S)-allantoin. In Bos taurus (Bovine), this protein is Uricase (UOX).